The sequence spans 263 residues: Hydroxyethylthiazole kinase 1 (263 aa).

Met42 is a substrate binding site. ATP-binding residues include Lys118 and Thr164. Position 191 (Gly191) interacts with substrate.

This sequence belongs to the Thz kinase family. Mg(2+) is required as a cofactor.

It carries out the reaction 5-(2-hydroxyethyl)-4-methylthiazole + ATP = 4-methyl-5-(2-phosphooxyethyl)-thiazole + ADP + H(+). The protein operates within cofactor biosynthesis; thiamine diphosphate biosynthesis; 4-methyl-5-(2-phosphoethyl)-thiazole from 5-(2-hydroxyethyl)-4-methylthiazole: step 1/1. In terms of biological role, catalyzes the phosphorylation of the hydroxyl group of 4-methyl-5-beta-hydroxyethylthiazole (THZ). The polypeptide is Hydroxyethylthiazole kinase 1 (Clostridium botulinum (strain Kyoto / Type A2)).